The sequence spans 313 residues: Ribosomal RNA small subunit methyltransferase H (313 aa).

Residues 37-39 (GGH), Asp-57, Phe-82, Asp-104, and Gln-111 each bind S-adenosyl-L-methionine.

It belongs to the methyltransferase superfamily. RsmH family.

The protein resides in the cytoplasm. The catalysed reaction is cytidine(1402) in 16S rRNA + S-adenosyl-L-methionine = N(4)-methylcytidine(1402) in 16S rRNA + S-adenosyl-L-homocysteine + H(+). Its function is as follows. Specifically methylates the N4 position of cytidine in position 1402 (C1402) of 16S rRNA. This Alteromonas mediterranea (strain DSM 17117 / CIP 110805 / LMG 28347 / Deep ecotype) protein is Ribosomal RNA small subunit methyltransferase H.